The primary structure comprises 117 residues: Large ribosomal subunit protein bL20 (117 aa).

Belongs to the bacterial ribosomal protein bL20 family.

In terms of biological role, binds directly to 23S ribosomal RNA and is necessary for the in vitro assembly process of the 50S ribosomal subunit. It is not involved in the protein synthesizing functions of that subunit. The sequence is that of Large ribosomal subunit protein bL20 from Nitratidesulfovibrio vulgaris (strain DP4) (Desulfovibrio vulgaris).